A 320-amino-acid polypeptide reads, in one-letter code: Olfactory receptor 52N1 (320 aa).

Residues 1–27 are Extracellular-facing; the sequence is MSFLNGTSLTPASFILNGIPGLEDVHL. N-linked (GlcNAc...) asparagine glycosylation is present at asparagine 5. The chain crosses the membrane as a helical span at residues 28-48; it reads WISFPLCTMYSIAITGNFGLM. The Cytoplasmic segment spans residues 49–56; it reads YLIYCDEA. Residues 57–77 form a helical membrane-spanning segment; the sequence is LHRPMYVFLALLSFTDVLMCT. The Extracellular portion of the chain corresponds to 78–101; the sequence is STLPNTLFILWFNLKEIDFKACLA. Cysteine 99 and cysteine 191 are oxidised to a cystine. The helical transmembrane segment at 102-122 threads the bilayer; the sequence is QMFFVHTFTGMESGVLMLMAL. The Cytoplasmic portion of the chain corresponds to 123–141; it reads DHCVAICFPLRYATILTNS. A helical membrane pass occupies residues 142-162; it reads VIAKAGFLTFLRGVMLVIPST. Residues 163 to 198 lie on the Extracellular side of the membrane; that stretch reads FLTKRLPYCKGNVIPHTYCDHMSVAKISCGNVRVNA. Residues 199–219 traverse the membrane as a helical segment; it reads IYGLIVALLIGGFDILCITIS. Residues 220-239 lie on the Cytoplasmic side of the membrane; it reads YTMILQAVVSLSSADARQKA. Residues 240–260 traverse the membrane as a helical segment; it reads FSTCTAHFCAIVLTYVPAFFT. Residues 261–276 lie on the Extracellular side of the membrane; it reads FFTHHFGGHTIPLHIH. A helical transmembrane segment spans residues 277-297; it reads IIMANLYLLMPPTMNPIVYGV. The Cytoplasmic portion of the chain corresponds to 298-320; the sequence is KTRQVRESVIRFFLKGKDNSHNF.

It belongs to the G-protein coupled receptor 1 family.

It is found in the cell membrane. Functionally, odorant receptor. The chain is Olfactory receptor 52N1 (OR52N1) from Homo sapiens (Human).